Here is a 163-residue protein sequence, read N- to C-terminus: MANCYFDVSSNGKPLGRIVFELYDDVVPRTTNNFRQLCLNPPGKGFKHSIFHRVIPDFMIQGGDFTNGNGTGGESIYGKKFEDENFQKKHVERGMLSMANAGPNTNGSQFFITVTKTPWLDGKHVVFGKVIEGYDQVVKAMEKTGSQSGKTSSVLKIEDCGTL.

In terms of domain architecture, PPIase cyclophilin-type spans 5–162; the sequence is YFDVSSNGKP…SVLKIEDCGT (158 aa).

This sequence belongs to the cyclophilin-type PPIase family. PPIase A subfamily.

The protein localises to the cytoplasm. It catalyses the reaction [protein]-peptidylproline (omega=180) = [protein]-peptidylproline (omega=0). Binds cyclosporin A (CsA). CsA mediates some of its effects via an inhibitory action on PPIase. Functionally, PPIases accelerate the folding of proteins. It catalyzes the cis-trans isomerization of proline imidic peptide bonds in oligopeptides. This Uromyces fabae (Rust fungus) protein is Peptidyl-prolyl cis-trans isomerase (PIG28).